Here is a 78-residue protein sequence, read N- to C-terminus: uncharacterized protein (78 aa).

Transmembrane regions (helical) follow at residues 5–24 and 39–61; these read LALL…IKLM and LWLQ…AGFI.

The protein localises to the cell membrane. This is an uncharacterized protein from Bacillus subtilis (strain 168).